The chain runs to 59 residues: Large ribosomal subunit protein uL30 (59 aa).

It belongs to the universal ribosomal protein uL30 family. As to quaternary structure, part of the 50S ribosomal subunit.

This Haemophilus ducreyi (strain 35000HP / ATCC 700724) protein is Large ribosomal subunit protein uL30.